A 308-amino-acid chain; its full sequence is Bifunctional protein FolD (308 aa).

NADP(+)-binding positions include 175 to 177 (GRS), Ser-200, and Ile-241.

The protein belongs to the tetrahydrofolate dehydrogenase/cyclohydrolase family. In terms of assembly, homodimer.

It carries out the reaction (6R)-5,10-methylene-5,6,7,8-tetrahydrofolate + NADP(+) = (6R)-5,10-methenyltetrahydrofolate + NADPH. The catalysed reaction is (6R)-5,10-methenyltetrahydrofolate + H2O = (6R)-10-formyltetrahydrofolate + H(+). Its pathway is one-carbon metabolism; tetrahydrofolate interconversion. Its function is as follows. Catalyzes the oxidation of 5,10-methylenetetrahydrofolate to 5,10-methenyltetrahydrofolate and then the hydrolysis of 5,10-methenyltetrahydrofolate to 10-formyltetrahydrofolate. This is Bifunctional protein FolD from Jannaschia sp. (strain CCS1).